The following is a 365-amino-acid chain: LIM and cysteine-rich domains protein 1 (365 aa).

Phosphoserine is present on Ser16. The region spanning 99–206 (MIMTNPIATG…GEVALPGQGG (108 aa)) is the PET domain. The tract at residues 200–235 (ALPGQGGLPKEEGKQQEKPEGAETTAATTNGSLSDP) is disordered. Residues 208 to 220 (PKEEGKQQEKPEG) show a composition bias toward basic and acidic residues. 2 consecutive LIM zinc-binding domains span residues 241-306 (YVCE…SLRP) and 307-365 (RCSG…SKRS).

Interacts with GATA1 and GATA4. Interacts with beta-dystroglycan. Interacts with GATA6. In terms of tissue distribution, expressed in the heart (at protein level). Expressed in many tissues with highest abundance in skeletal muscle.

The protein resides in the cytoplasm. The protein localises to the nucleus. Transcriptional cofactor that restricts GATA6 function by inhibiting DNA-binding, resulting in repression of GATA6 transcriptional activation of downstream target genes. Represses GATA6-mediated trans activation of lung- and cardiac tissue-specific promoters. Inhibits DNA-binding by GATA4 and GATA1 to the cTNC promoter. Plays a critical role in the development of cardiac hypertrophy via activation of calcineurin/nuclear factor of activated T-cells signaling pathway. The protein is LIM and cysteine-rich domains protein 1 (LMCD1) of Homo sapiens (Human).